A 217-amino-acid chain; its full sequence is Pyridoxine/pyridoxamine 5'-phosphate oxidase (217 aa).

Residues 13 to 16 (RREY) and Lys-71 each bind substrate. FMN is bound by residues 66–71 (RIVLLK), 81–82 (YT), Arg-87, Lys-88, and Gln-110. Substrate contacts are provided by Tyr-128, Arg-132, and Ser-136. Residues 145–146 (QS) and Trp-190 each bind FMN. 196-198 (RLH) is a substrate binding site. Residue Arg-200 coordinates FMN.

Belongs to the pyridoxamine 5'-phosphate oxidase family. In terms of assembly, homodimer. It depends on FMN as a cofactor.

The catalysed reaction is pyridoxamine 5'-phosphate + O2 + H2O = pyridoxal 5'-phosphate + H2O2 + NH4(+). The enzyme catalyses pyridoxine 5'-phosphate + O2 = pyridoxal 5'-phosphate + H2O2. Its pathway is cofactor metabolism; pyridoxal 5'-phosphate salvage; pyridoxal 5'-phosphate from pyridoxamine 5'-phosphate: step 1/1. It participates in cofactor metabolism; pyridoxal 5'-phosphate salvage; pyridoxal 5'-phosphate from pyridoxine 5'-phosphate: step 1/1. Its function is as follows. Catalyzes the oxidation of either pyridoxine 5'-phosphate (PNP) or pyridoxamine 5'-phosphate (PMP) into pyridoxal 5'-phosphate (PLP). This is Pyridoxine/pyridoxamine 5'-phosphate oxidase from Photorhabdus laumondii subsp. laumondii (strain DSM 15139 / CIP 105565 / TT01) (Photorhabdus luminescens subsp. laumondii).